Consider the following 87-residue polypeptide: DNA-directed RNA polymerase subunit omega (87 aa).

It belongs to the RNA polymerase subunit omega family. As to quaternary structure, the RNAP catalytic core consists of 2 alpha, 1 beta, 1 beta' and 1 omega subunit. When a sigma factor is associated with the core the holoenzyme is formed, which can initiate transcription.

It catalyses the reaction RNA(n) + a ribonucleoside 5'-triphosphate = RNA(n+1) + diphosphate. Its function is as follows. Promotes RNA polymerase assembly. Latches the N- and C-terminal regions of the beta' subunit thereby facilitating its interaction with the beta and alpha subunits. The polypeptide is DNA-directed RNA polymerase subunit omega (Pseudomonas putida (strain ATCC 700007 / DSM 6899 / JCM 31910 / BCRC 17059 / LMG 24140 / F1)).